The chain runs to 1084 residues: CRISPR-associated endonuclease Cas9 (1084 aa).

Catalysis depends on D8, which acts as the For RuvC-like nuclease domain. Mn(2+)-binding residues include D8, E496, and E500. The 162-residue stretch at 504-665 folds into the HNH Cas9-type domain; the sequence is TEKRAREMDG…MDEEIDARSM (162 aa). The active-site Proton acceptor for HNH nuclease domain is H573. H727 lines the Mn(2+) pocket.

The protein belongs to the CRISPR-associated protein Cas9 family. Subtype II-C subfamily. As to quaternary structure, monomer. Binds crRNA and tracrRNA. Requires Mg(2+) as cofactor.

Functionally, CRISPR (clustered regularly interspaced short palindromic repeat) is an adaptive immune system that provides protection against mobile genetic elements (viruses, transposable elements and conjugative plasmids). CRISPR clusters contain spacers, sequences complementary to antecedent mobile elements, and target invading nucleic acids. CRISPR clusters are transcribed and processed into CRISPR RNA (crRNA). In type II CRISPR systems correct processing of pre-crRNA requires a trans-encoded small RNA (tracrRNA), endogenous ribonuclease 3 (rnc) and this protein. The tracrRNA serves as a guide for ribonuclease 3-aided processing of pre-crRNA. Subsequently Cas9/crRNA/tracrRNA endonucleolytically cleaves linear or circular dsDNA target complementary to the spacer; Cas9 is inactive in the absence of the 2 guide RNAs (gRNA). Cas9 recognizes the protospacer adjacent motif (PAM) in the CRISPR repeat sequences to help distinguish self versus nonself, as targets within the bacterial CRISPR locus do not have PAMs. PAM recognition is also required for catalytic activity. In Corynebacterium diphtheriae (strain ATCC 700971 / NCTC 13129 / Biotype gravis), this protein is CRISPR-associated endonuclease Cas9.